Here is a 202-residue protein sequence, read N- to C-terminus: Probable chemoreceptor glutamine deamidase CheD (202 aa).

This sequence belongs to the CheD family.

It carries out the reaction L-glutaminyl-[protein] + H2O = L-glutamyl-[protein] + NH4(+). Probably deamidates glutamine residues to glutamate on methyl-accepting chemotaxis receptors (MCPs), playing an important role in chemotaxis. The polypeptide is Probable chemoreceptor glutamine deamidase CheD (Thiobacillus denitrificans (strain ATCC 25259 / T1)).